The chain runs to 165 residues: Late embryogenesis abundant protein D-113 (165 aa).

Residues 1-13 (MQSMKDAAASAKA) show a composition bias toward low complexity. 2 disordered regions span residues 1–76 (MQSM…IGGT) and 92–165 (GGTG…YRSY). Basic and acidic residues predominate over residues 14 to 60 (GMEKAKASMQEKVDQMKTRDPNEKEMARERKEERQEDAELRKQEARH). Residues 67–76 (HVGGGGIGGT) show a composition bias toward gly residues. Residues 132 to 155 (TTGNQDFPNAASNNAGTRRNTRGG) are compositionally biased toward polar residues.

The protein belongs to the LEA type 1 family.

Its function is as follows. LEA proteins are late embryonic proteins abundant in higher plant seed embryos. There are two subsets of LEA proteins (5a and 5b), the first ones are expressed when the cotyledon weight reach 80 mg and the second set are expressed above 100 mg. The function of those proteins is not known. This is Late embryogenesis abundant protein D-113 from Gossypium hirsutum (Upland cotton).